The following is a 96-amino-acid chain: UPF0235 protein Acid345_4205 (96 aa).

It belongs to the UPF0235 family.

The sequence is that of UPF0235 protein Acid345_4205 from Koribacter versatilis (strain Ellin345).